The sequence spans 467 residues: Envelope glycoprotein M (467 aa).

Residues 1 to 32 lie on the Intravirion side of the membrane; that stretch reads MGRRAPRGSPEAAPGADVAPGARAAWWVWCVQ. Residues 33-53 form a helical membrane-spanning segment; sequence VATFIVSAICVVGLLVLASVF. Residues 54-90 are Virion surface-facing; sequence RDRFPCLYAPATSYAKANATVEVRGGVAVPLRLDTQS. The helical transmembrane segment at 91–111 threads the bilayer; that stretch reads LLATYAITSTLLLAAAVYAAV. Over 112 to 137 the chain is Intravirion; it reads GAVTSRYERALDAARRLAAARMAMPH. Residues 138–158 traverse the membrane as a helical segment; it reads ATLIAGNVCAWLLQITVLLLA. Over 159–163 the chain is Virion surface; sequence HRISQ. Residues 164-184 traverse the membrane as a helical segment; that stretch reads LAHLIYVLHFACLVYLAAHFC. The Intravirion segment spans residues 185-220; that stretch reads TRGVLSGTYLRQVHGLIDPAPTHHRIVGPVRAVMTN. The chain crosses the membrane as a helical span at residues 221-241; it reads ALLLGTLLCTAAAAVSLNTIA. The Virion surface portion of the chain corresponds to 242-250; sequence ALNFNFSAP. A helical transmembrane segment spans residues 251 to 271; sequence SMLICLTTLFALLVVSLLLVV. The Intravirion portion of the chain corresponds to 272-280; the sequence is EGVLCHYVR. The helical transmembrane segment at 281-301 threads the bilayer; the sequence is VLVGPHLGAIAATGIVGLACE. At 302-318 the chain is on the virion surface side; the sequence is HYHTGGYYVVEQQWPGA. Residues 319 to 339 traverse the membrane as a helical segment; the sequence is QTGVRVALALVAAFALAMAVL. The Intravirion segment spans residues 340 to 467; the sequence is RCTRAYLYHR…EPVYSTVRRW (128 aa). Over residues 371–381 the composition is skewed to basic residues; that stretch reads RRVRSSMRGSR. Disordered stretches follow at residues 371–395 and 432–459; these read RRVR…AETP and VQRP…AGEP.

This sequence belongs to the herpesviridae glycoprotein M family. As to quaternary structure, interacts (via N-terminus) with gN (via N-terminus). The gM-gN heterodimer forms the gCII complex.

It is found in the virion membrane. It localises to the host Golgi apparatus. Its subcellular location is the host trans-Golgi network. The protein resides in the host endosome membrane. The protein localises to the host nucleus inner membrane. Envelope glycoprotein important for virion assembly and egress. Plays a role in the correct incorporation of gH-gL into virion membrane. Directs the glycoprotein N (gN) to the host trans-Golgi network. The protein is Envelope glycoprotein M of Human herpesvirus 2 (strain HG52) (HHV-2).